We begin with the raw amino-acid sequence, 487 residues long: 7-deoxyloganetin glucosyltransferase (487 aa).

The Proton acceptor role is filled by His25. Position 25 (His25) interacts with an anthocyanidin. The active-site Charge relay is Asp129. Positions 151, 366, 381, 384, 385, 386, and 389 each coordinate UDP-alpha-D-glucose. Ala404 provides a ligand contact to an anthocyanidin. Positions 405 and 406 each coordinate UDP-alpha-D-glucose.

The protein belongs to the UDP-glycosyltransferase family. As to expression, expressed in roots.

The catalysed reaction is 7-deoxyloganetin + UDP-alpha-D-glucose = 7-deoxyloganin + UDP + H(+). Its function is as follows. Iridoid glucosyltransferase acting exclusively on 7-deoxyloganetin. No activity with 7-deoxyloganetic acid. The chain is 7-deoxyloganetin glucosyltransferase (UGT85A23) from Catharanthus roseus (Madagascar periwinkle).